The chain runs to 175 residues: Calcineurin subunit B (175 aa).

EF-hand domains follow at residues 21–56 (AEIERLKKRFMKLDKDSSGSIDKTEFMSIPGVSANP), 58–88 (AKRIIEVFDEDNSGDVDFQEFITSLSIFSGR), 90–125 (ETDAKLRFAFRIYDIDKDGYISNGELFIVLKIMVGT), and 131–166 (QLQQIVDRTIMENDVDGDGKLSFEEFKKAAETTEVI). Residues Asp-34, Asp-36, Ser-38, Ser-40, Glu-45, Asp-66, Asp-68, Ser-70, Asp-72, Glu-77, Asp-103, Asp-105, Asp-107, Tyr-109, Glu-114, Asp-144, Asp-146, Asp-148, Lys-150, and Glu-155 each coordinate Ca(2+).

This sequence belongs to the calcineurin regulatory subunit family. As to quaternary structure, composed of a catalytic subunit (A) and a regulatory subunit (B).

Its function is as follows. Regulatory subunit of calcineurin, a calcium-dependent, calmodulin stimulated protein phosphatase. Confers calcium sensitivity. In Kluyveromyces lactis (strain ATCC 8585 / CBS 2359 / DSM 70799 / NBRC 1267 / NRRL Y-1140 / WM37) (Yeast), this protein is Calcineurin subunit B (CNB1).